The sequence spans 778 residues: Gelsolin (778 aa).

The signal sequence occupies residues 1–23 (MGKQGFGYIFLTIFCTMALKLNC). Residues 49–172 (MVEHAEFSKA…YKAGGVASGF (124 aa)) form an actin-severing region. The stretch at 72-154 (FDLVPVPKNL…VQGHESSTFL (83 aa)) is one Gelsolin-like 1 repeat. Residues G88, D89, E120, D132, G137, and A139 each coordinate Ca(2+). Residues 119 to 122 (DERG) form an actin-actin interfilament contact point region. 158-165 (KSGIKYKA) serves as a coordination point for a 1,2-diacyl-sn-glycero-3-phospho-(1D-myo-inositol-4,5-bisphosphate). V168 contacts Ca(2+). Residue 184–192 (RLLQVKGRR) coordinates a 1,2-diacyl-sn-glycero-3-phospho-(1D-myo-inositol-4,5-bisphosphate). One copy of the Gelsolin-like 2 repeat lies at 193–266 (TVRATEVPVS…SEEGAEREEM (74 aa)). G209 and D210 together coordinate Ca(2+). Cysteines 211 and 224 form a disulfide. E232, D282, E325, D326, E350, G467, D468, E498, D510, G515, P517, T547, N587, D588, E610, D692, D693, and E715 together coordinate Ca(2+). Gelsolin-like repeat units follow at residues 313–385 (DENP…TPLF) and 451–532 (SEKV…PHLM). The actin-binding, Ca-sensitive stretch occupies residues 430 to 778 (AAQHGMEDDG…LQRAMADVDV (349 aa)). 2 Gelsolin-like repeats span residues 574–638 (AVEL…DNFW) and 677–752 (IEEV…PPTF).

This sequence belongs to the villin/gelsolin family. Binds to actin and to fibronectin. In terms of tissue distribution, highly expressed in homogene cells of the basilar papilla. Also detected in subcutaneous layer of the skin.

The protein resides in the secreted. The protein localises to the cytoplasm. Its subcellular location is the cytoskeleton. Calcium-regulated, actin-modulating protein that binds to the plus (or barbed) ends of actin monomers or filaments, preventing monomer exchange (end-blocking or capping). It can promote the assembly of monomers into filaments (nucleation) as well as sever filaments already formed. Plays a role in ciliogenesis. This chain is Gelsolin (GSN), found in Gallus gallus (Chicken).